We begin with the raw amino-acid sequence, 248 residues long: Adenylate kinase isoenzyme 6 homolog HBR1 (248 aa).

ATP is bound by residues G19, G21, K22, S23, and S24. The segment at 49–72 (NISEIAKERDCIESYDAKLDTSIV) is NMPbind. Residues 124-134 (TRNYNDLKLQE) form an LID region. Position 125 (R125) interacts with ATP. The interval 188-248 (DGVSNELNKQ…EMEHTEDIAQ (61 aa)) is disordered. The span at 202–238 (DSSDEGDDNSDSDEYELEEDEQEEEEEREEYDEETNE) shows a compositional bias: acidic residues. Residues 239-248 (EMEHTEDIAQ) show a composition bias toward basic and acidic residues.

Belongs to the adenylate kinase family. AK6 subfamily. In terms of assembly, interacts with small ribosomal subunit protein uS11. Not a structural component of 43S pre-ribosomes, but transiently interacts with them by binding to uS11.

The protein resides in the cytoplasm. Its subcellular location is the nucleus. It carries out the reaction AMP + ATP = 2 ADP. It catalyses the reaction ATP + H2O = ADP + phosphate + H(+). In terms of biological role, broad-specificity nucleoside monophosphate (NMP) kinase that catalyzes the reversible transfer of the terminal phosphate group between nucleoside triphosphates and monophosphates. Also has ATPase activity. Involved in the late cytoplasmic maturation steps of the 40S ribosomal particles, specifically 18S rRNA maturation. While NMP activity is not required for ribosome maturation, ATPase activity is. Associates transiently with small ribosomal subunit protein uS11. ATP hydrolysis breaks the interaction with uS11. May temporarily remove uS11 from the ribosome to enable a conformational change of the ribosomal RNA that is needed for the final maturation step of the small ribosomal subunit. Its NMP activity may have a role in nuclear energy homeostasis. Induces transcription of mating-type proteins ALPHA1 and ALPHA2 and moderately represses transcription of mating-type protein A1 in response to hemoglobin and growth signals. Involved in the induction of a high affinity fibronectin receptor by sub-inhibitory dosages of caspofungin. This chain is Adenylate kinase isoenzyme 6 homolog HBR1 (HBR1), found in Candida albicans (strain SC5314 / ATCC MYA-2876) (Yeast).